The sequence spans 1132 residues: Error-prone DNA polymerase (1132 aa).

Belongs to the DNA polymerase type-C family. DnaE2 subfamily.

The protein resides in the cytoplasm. The enzyme catalyses DNA(n) + a 2'-deoxyribonucleoside 5'-triphosphate = DNA(n+1) + diphosphate. DNA polymerase involved in damage-induced mutagenesis and translesion synthesis (TLS). It is not the major replicative DNA polymerase. This Anaeromyxobacter dehalogenans (strain 2CP-C) protein is Error-prone DNA polymerase.